Consider the following 311-residue polypeptide: Thymidylate synthase (311 aa).

Residues Arg28 and 172 to 173 (RR) each bind dUMP. Catalysis depends on Cys192, which acts as the Nucleophile. Residues 213 to 216 (RSCD), Asn224, and 254 to 256 (HLY) contribute to the dUMP site. Asp216 is a (6R)-5,10-methylene-5,6,7,8-tetrahydrofolate binding site. (6R)-5,10-methylene-5,6,7,8-tetrahydrofolate is bound at residue Ala310.

Belongs to the thymidylate synthase family. Bacterial-type ThyA subfamily. In terms of assembly, homodimer.

Its subcellular location is the cytoplasm. It carries out the reaction dUMP + (6R)-5,10-methylene-5,6,7,8-tetrahydrofolate = 7,8-dihydrofolate + dTMP. It functions in the pathway pyrimidine metabolism; dTTP biosynthesis. Functionally, catalyzes the reductive methylation of 2'-deoxyuridine-5'-monophosphate (dUMP) to 2'-deoxythymidine-5'-monophosphate (dTMP) while utilizing 5,10-methylenetetrahydrofolate (mTHF) as the methyl donor and reductant in the reaction, yielding dihydrofolate (DHF) as a by-product. This enzymatic reaction provides an intracellular de novo source of dTMP, an essential precursor for DNA biosynthesis. The sequence is that of Thymidylate synthase from Sphingopyxis alaskensis (strain DSM 13593 / LMG 18877 / RB2256) (Sphingomonas alaskensis).